Here is a 158-residue protein sequence, read N- to C-terminus: NAD(P)H-quinone oxidoreductase subunit J, chloroplastic (158 aa).

Belongs to the complex I 30 kDa subunit family. In terms of assembly, NDH is composed of at least 16 different subunits, 5 of which are encoded in the nucleus.

Its subcellular location is the plastid. The protein localises to the chloroplast thylakoid membrane. It carries out the reaction a plastoquinone + NADH + (n+1) H(+)(in) = a plastoquinol + NAD(+) + n H(+)(out). The enzyme catalyses a plastoquinone + NADPH + (n+1) H(+)(in) = a plastoquinol + NADP(+) + n H(+)(out). Functionally, NDH shuttles electrons from NAD(P)H:plastoquinone, via FMN and iron-sulfur (Fe-S) centers, to quinones in the photosynthetic chain and possibly in a chloroplast respiratory chain. The immediate electron acceptor for the enzyme in this species is believed to be plastoquinone. Couples the redox reaction to proton translocation, and thus conserves the redox energy in a proton gradient. The polypeptide is NAD(P)H-quinone oxidoreductase subunit J, chloroplastic (Lactuca sativa (Garden lettuce)).